A 312-amino-acid polypeptide reads, in one-letter code: Olfactory receptor 4F6 (312 aa).

At 1–25 (MDEANHSVVSEFVFLGLSDSRKIQL) the chain is on the extracellular side. A glycan (N-linked (GlcNAc...) asparagine) is linked at Asn5. The chain crosses the membrane as a helical span at residues 26–49 (LLFLFFSVFYVSSLMGNLLIVLTV). Over 50 to 57 (TSDPRLQS) the chain is Cytoplasmic. The helical transmembrane segment at 58–79 (PMYFLLANLSIINLVFCSSTAP) threads the bilayer. At 80 to 100 (KMIYDLFRKHKTISFGGCVVQ) the chain is on the extracellular side. The cysteines at positions 97 and 189 are disulfide-linked. A helical membrane pass occupies residues 101–120 (IFFIHAVGGTEMVLLIAMAF). The Cytoplasmic segment spans residues 121–139 (DRYVAICKPLHYLTIMNPQ). The chain crosses the membrane as a helical span at residues 140-158 (RCILFLVISWIIGIIHSVI). Residues 159–195 (QLAFVVDLLFCGPNELDSFFCDLPRFIKLACIETYTL) lie on the Extracellular side of the membrane. The chain crosses the membrane as a helical span at residues 196 to 219 (GFMVTANSGFISLASFLILIISYI). Residues 220-235 (FILVTVQKKSSGGIFK) lie on the Cytoplasmic side of the membrane. Residues 236-258 (AFSMLSAHVIVVVLVFGPLIFFY) traverse the membrane as a helical segment. Residues 259–269 (IFPFPTSHLDK) lie on the Extracellular side of the membrane. A helical transmembrane segment spans residues 270-289 (FLAIFDAVITPVLNPVIYTF). Residues 290–312 (RNKEMMVAMRRRCSQFVNYSKIF) are Cytoplasmic-facing.

It belongs to the G-protein coupled receptor 1 family.

It localises to the cell membrane. Its function is as follows. Odorant receptor. The polypeptide is Olfactory receptor 4F6 (OR4F6) (Homo sapiens (Human)).